The primary structure comprises 1065 residues: Inversin (1065 aa).

ANK repeat units lie at residues 13 to 42, 47 to 76, 80 to 110, 113 to 144, 148 to 177, 181 to 213, 220 to 250, 254 to 283, 288 to 317, 321 to 350, 356 to 385, 389 to 418, 422 to 451, 455 to 484, 488 to 517, and 523 to 553; these read SLAS…ALKD, FGRT…DVNK, SQRT…WMQK, EEMT…EVDT, NKQT…NIGI, EGKI…TESL, EGRT…NITS, LFRT…SGTI, QGAT…VKDD, EGRT…DIDI, YGGT…QVDA, MKHT…RVDL, DGHS…NPNV, AGRT…DPNI, EGRT…FPNQ, and ERYT…SIAA. Asparagine 75 carries the 3-hydroxyasparagine modification. Residues 490-498 carry the D-box 1 motif; sequence RTALHWSCN. The region spanning 555–584 is the IQ 1 domain; it reads QDIAAFKIQAVYKGYKVRKAFRDRKNLLMK. Over residues 589–616 the composition is skewed to basic and acidic residues; sequence RKDAAAKKREEENKRKEAEQQKGRRSPD. 2 disordered regions span residues 589 to 833 and 847 to 886; these read RKDA…TPRN and HLPQ…PLSG. Over residues 627 to 640 the composition is skewed to polar residues; that stretch reads PSTQDVPSRQSRAP. At serine 661 the chain carries Phosphoserine. Positions 677-686 are enriched in polar residues; the sequence is SSDLQGTNSR. Composition is skewed to basic and acidic residues over residues 687–697, 706–715, 723–736, 752–762, 770–786, and 853–863; these read RPNETAREHSK, RPNEGSDGSR, EKSR…ERCA, GPDEKGEDSRR, HDSH…EPKA, and EELRSGARRLE. Residues 909-917 carry the D-box 2 motif; the sequence is RKELFRKKN. Residues 916–945 enclose the IQ 2 domain; the sequence is KNKAAAVIQRAWRSYQLRKHLSHLRHMKQL. The segment at 976-999 is disordered; sequence TTAVSKAPKSPSKGTSGTKSTKHS. Residues 983 to 994 are compositionally biased toward low complexity; that stretch reads PKSPSKGTSGTK.

Binds calmodulin via its IQ domains. Interacts with APC2. Interacts with alpha-, beta-, and gamma-catenin. Interacts with N-cadherin (CDH2). Interacts with microtubules. Interacts with NPHP1. Interacts with DVL1, PRICKLE (PRICKLE1 or PRICKLE2) and Strabismus (VANGL1 or VANGL2). Interacts with IQCB1; the interaction likely requires additional interactors. Component of a complex containing at least ANKS6, INVS, NEK8 and NPHP3. ANKS6 may organize complex assembly by linking INVS and NPHP3 to NEK8 and INVS may target the complex to the proximal ciliary axoneme. May be ubiquitinated via its interaction with APC2. In terms of processing, hydroxylated at Asn-75, most probably by HIF1AN. As to expression, widely expressed. Strongly expressed in the primary cilia of renal tubular cells.

It is found in the cytoplasm. It localises to the cytoskeleton. Its subcellular location is the spindle. The protein localises to the membrane. The protein resides in the nucleus. It is found in the cell projection. It localises to the cilium. Its function is as follows. Required for normal renal development and establishment of left-right axis. Probably acts as a molecular switch between different Wnt signaling pathways. Inhibits the canonical Wnt pathway by targeting cytoplasmic disheveled (DVL1) for degradation by the ubiquitin-proteasome. This suggests that it is required in renal development to oppose the repression of terminal differentiation of tubular epithelial cells by Wnt signaling. Involved in the organization of apical junctions in kidney cells together with NPHP1, NPHP4 and RPGRIP1L/NPHP8. Does not seem to be strictly required for ciliogenesis. This Homo sapiens (Human) protein is Inversin (INVS).